The sequence spans 475 residues: Isocitrate dehydrogenase [NADP] (475 aa).

NADP(+) is bound at residue threonine 104. Residues serine 113, asparagine 115, arginine 119, arginine 129, and arginine 153 each coordinate D-threo-isocitrate. Aspartate 362 is a binding site for Mg(2+). NADP(+) is bound by residues 394 to 400 (HGTAPKH), asparagine 407, tyrosine 446, and arginine 450.

The protein belongs to the isocitrate and isopropylmalate dehydrogenases family. As to quaternary structure, homodimer. Requires Mg(2+) as cofactor. Mn(2+) is required as a cofactor.

The protein resides in the cytoplasm. It catalyses the reaction D-threo-isocitrate + NADP(+) = 2-oxoglutarate + CO2 + NADPH. Inhibited non-competitively by ADP and 2-oxoglutarate, with respect to isocitrate and in a competitive manner by NADPH. Functionally, catalyzes the oxidative decarboxylation of isocitrate to 2-oxoglutarate and carbon dioxide with the concomitant reduction of NADP(+). Is specific for NADP(+), cannot use NAD(+). The polypeptide is Isocitrate dehydrogenase [NADP] (Synechocystis sp. (strain ATCC 27184 / PCC 6803 / Kazusa)).